We begin with the raw amino-acid sequence, 591 residues long: L-fucose isomerase (591 aa).

Residues E337 and D361 each act as proton acceptor in the active site. Positions 337, 361, and 528 each coordinate Mn(2+).

The protein belongs to the L-fucose isomerase family. In terms of assembly, homohexamer. The cofactor is Mn(2+).

The protein resides in the cytoplasm. It carries out the reaction L-fucose = L-fuculose. Its pathway is carbohydrate degradation; L-fucose degradation; L-lactaldehyde and glycerone phosphate from L-fucose: step 1/3. Converts the aldose L-fucose into the corresponding ketose L-fuculose. This chain is L-fucose isomerase, found in Salmonella arizonae (strain ATCC BAA-731 / CDC346-86 / RSK2980).